The chain runs to 109 residues: Homeobox protein E30 (109 aa).

Positions 1–12 (GPRTRRVKRSHN) are enriched in basic residues. The disordered stretch occupies residues 1–27 (GPRTRRVKRSHNGKNGSPEEKRPRTAF). The segment at residues 20-79 (EKRPRTAFSAEQLARLKREFAENRYLTERRRQQLSRDLGLTEAQIKIWFQNKRAKIKKAS) is a DNA-binding region (homeobox).

Belongs to the engrailed homeobox family.

Its subcellular location is the nucleus. This Apis mellifera (Honeybee) protein is Homeobox protein E30.